Consider the following 287-residue polypeptide: Glycine--tRNA ligase alpha subunit (287 aa).

This sequence belongs to the class-II aminoacyl-tRNA synthetase family. Tetramer of two alpha and two beta subunits.

The protein localises to the cytoplasm. The enzyme catalyses tRNA(Gly) + glycine + ATP = glycyl-tRNA(Gly) + AMP + diphosphate. This is Glycine--tRNA ligase alpha subunit from Campylobacter jejuni (strain RM1221).